A 105-amino-acid chain; its full sequence is Insulin (105 aa).

A signal peptide spans 1 to 22 (MAFWLQAASLLVLLALSPGVDA). 3 disulfide bridges follow: Cys-29/Cys-91, Cys-41/Cys-104, and Cys-90/Cys-95. Positions 53 to 82 (DVDPLIGFLSPKSAKENEEYPFKDQTEMMV) are cleaved as a propeptide — c peptide.

It belongs to the insulin family. As to quaternary structure, heterodimer of a B chain and an A chain linked by two disulfide bonds.

The protein resides in the secreted. Its function is as follows. Insulin decreases blood glucose concentration. It increases cell permeability to monosaccharides, amino acids and fatty acids. It accelerates glycolysis, the pentose phosphate cycle, and glycogen synthesis in liver. The chain is Insulin (ins) from Oncorhynchus keta (Chum salmon).